The chain runs to 490 residues: Delta(14)-sterol reductase (490 aa).

Helical transmembrane passes span 23–43, 80–100, 136–156, 160–180, 230–250, 255–275, and 324–344; these read FGGP…VHVF, VFGL…ALSL, LAIL…WTFI, FAQI…FVYV, EFME…AFIA, LYGY…FYVF, and QLGA…YSIF. NADP(+) is bound by residues lysine 351, arginine 355, isoleucine 378, tryptophan 383, and 390-391; that span reads NY. The helical transmembrane segment at 436 to 456 threads the bilayer; sequence ARGWGIVFTYFYILYFAILLI. NADP(+)-binding positions include aspartate 462, 466 to 470, and tyrosine 477; that span reads CSKKY.

It belongs to the ERG4/ERG24 family.

It localises to the membrane. It carries out the reaction 4,4-dimethyl-5alpha-cholesta-8,24-dien-3beta-ol + NADP(+) = 4,4-dimethyl-5alpha-cholesta-8,14,24-trien-3beta-ol + NADPH + H(+). It participates in steroid biosynthesis; zymosterol biosynthesis; zymosterol from lanosterol: step 2/6. In terms of biological role, reduces the C14=C15 double bond of 4,4-dimethyl-cholesta-8,14,24-trienol to produce 4,4-dimethyl-cholesta-8,24-dienol. The polypeptide is Delta(14)-sterol reductase (erg-3) (Neurospora crassa (strain ATCC 24698 / 74-OR23-1A / CBS 708.71 / DSM 1257 / FGSC 987)).